The following is a 337-amino-acid chain: Heat-inducible transcription repressor HrcA (337 aa).

This sequence belongs to the HrcA family.

Functionally, negative regulator of class I heat shock genes (grpE-dnaK-dnaJ and groELS operons). Prevents heat-shock induction of these operons. This chain is Heat-inducible transcription repressor HrcA, found in Nocardioides sp. (strain ATCC BAA-499 / JS614).